Consider the following 452-residue polypeptide: L-seryl-tRNA(Sec) selenium transferase (452 aa).

Lys285 is modified (N6-(pyridoxal phosphate)lysine).

This sequence belongs to the SelA family. It depends on pyridoxal 5'-phosphate as a cofactor.

The protein resides in the cytoplasm. The enzyme catalyses L-seryl-tRNA(Sec) + selenophosphate + H(+) = L-selenocysteinyl-tRNA(Sec) + phosphate. It functions in the pathway aminoacyl-tRNA biosynthesis; selenocysteinyl-tRNA(Sec) biosynthesis; selenocysteinyl-tRNA(Sec) from L-seryl-tRNA(Sec) (bacterial route): step 1/1. Functionally, converts seryl-tRNA(Sec) to selenocysteinyl-tRNA(Sec) required for selenoprotein biosynthesis. In Aquifex aeolicus (strain VF5), this protein is L-seryl-tRNA(Sec) selenium transferase.